A 416-amino-acid polypeptide reads, in one-letter code: Phosphoglycerate kinase 2 (416 aa).

Substrate is bound by residues 28-30 (DMN), Arg44, 65-68 (HQSR), Arg122, and Arg162. ATP is bound by residues Glu337 and 362-365 (GGHI).

Belongs to the phosphoglycerate kinase family. As to quaternary structure, monomer.

The protein localises to the cytoplasm. It carries out the reaction (2R)-3-phosphoglycerate + ATP = (2R)-3-phospho-glyceroyl phosphate + ADP. Its pathway is carbohydrate degradation; glycolysis; pyruvate from D-glyceraldehyde 3-phosphate: step 2/5. This Methanosarcina acetivorans (strain ATCC 35395 / DSM 2834 / JCM 12185 / C2A) protein is Phosphoglycerate kinase 2.